Consider the following 242-residue polypeptide: Murein peptide amidase A (242 aa).

Residues 1-234 (MTVTRPRAER…FAMANLLRWH (234 aa)) enclose the Peptidase M14 domain. Positions 49, 52, and 157 each coordinate Zn(2+). Catalysis depends on E210, which acts as the Proton donor/acceptor.

The protein belongs to the peptidase M14 family. Homodimer. Requires Zn(2+) as cofactor.

It is found in the cytoplasm. The catalysed reaction is L-alanyl-gamma-D-glutamyl-meso-2,6-diaminopimelate + H2O = L-alanyl-D-glutamate + meso-2,6-diaminopimelate. It participates in cell wall degradation; peptidoglycan degradation. Functionally, involved in muropeptide degradation. Catalyzes the hydrolysis of the gamma-D-glutamyl-diaminopimelic acid (gamma-D-Glu-Dap) amide bond in the murein tripeptide L-alanyl-gamma-D-glutamyl-meso-diaminopimelic acid, leading to the formation of L-Ala-gamma-D-Glu and Dap. The polypeptide is Murein peptide amidase A (Escherichia coli O157:H7).